A 477-amino-acid polypeptide reads, in one-letter code: Homeobox protein Meis2 (477 aa).

The required for interaction with PBX1 stretch occupies residues 71–191; the sequence is DALKRDKDAI…KMPIDLVIDE (121 aa). Positions 110–193 constitute an MEIS N-terminal domain; the sequence is GGDVCSSDSF…PIDLVIDERD (84 aa). Basic and acidic residues predominate over residues 193–203; that stretch reads DGSSKSDHEEL. Positions 193–283 are disordered; that stretch reads DGSSKSDHEE…KKRQKKRGIF (91 aa). Polar residues-rich tracts occupy residues 204 to 217 and 239 to 251; these read SGSSTNLADHNPSS and GHASQSGDNSSEQ. A DNA-binding region (homeobox; TALE-type) is located at residues 276 to 338; that stretch reads RQKKRGIFPK…NARRRIVQPM (63 aa). The interaction with DNA stretch occupies residues 299-333; that stretch reads LTHPYPSEEQKKQLAQDTGLTILQVNNWFINARRR. The transcriptional activation domain stretch occupies residues 340–477; it reads DQSNRAGFLL…GGQVMDIHAQ (138 aa).

The protein belongs to the TALE/MEIS homeobox family. Monomer and homodimer. Heterodimer with HOXB13. Isoform Meis2A interacts with TLX1. Isoform Meis2B interacts with HOXA13 and PBX1 isoform PBX1b. Isoform Meis2D interacts with SP1, SP3 and KLF4. Isoform Meis2D interacts with PBX1 isoform PBX1a; the interaction partially relieves MEIS2 autoinhibition. Isoform Meis2B is part of a PDX1:PBX1b:MEIS2b complex; Meis2B is recruited by PBX1b and can be replaced by isoform Meis2D in a small fraction of complexes. Can form trimeric complexes including HOXB8 and PBX2 or PBX3. Displays spatially restricted expression patterns in the developing nervous system, limbs, face, and in various viscera. In adult, it is mainly expressed in the brain and female genital tract, with a different distribution of the alternative splice forms in these organs. Lower expression in lung and only basal level in heart, liver, kidney, spleen, and testis. Expressed in pancreatic islets (beta-cells only).

The protein resides in the nucleus. Its subcellular location is the cytoplasm. It localises to the perinuclear region. Involved in transcriptional regulation. Binds to HOX or PBX proteins to form dimers, or to a DNA-bound dimer of PBX and HOX proteins and thought to have a role in stabilization of the homeoprotein-DNA complex. Isoform Meis2B is required for the activity of a PDX1:PBX1b:MEIS2b complex in pancreatic acinar cells involved in the transcriptional activation of the ELA1 enhancer; the complex binds to the enhancer B element and cooperates with the transcription factor 1 complex (PTF1) bound to the enhancer A element; MEIS2 is not involved in complex DNA-binding. Probably in complex with PBX1, is involved in transcriptional regulation by KLF4. Isoforms Meis2B and Meis2D can bind to a EPHA8 promoter sequence containing the DNA motif 5'-CGGTCA-3'; in cooperation with a PBX protein (such as PBX2) is proposed to be involved in the transcriptional activation of EPHA8 in the developing midbrain. May be involved in regulation of myeloid differentiation. Can bind to the DNA sequence 5'-TGACAG-3'in the activator ACT sequence of the D(1A) dopamine receptor (DRD1) promoter and activate DRD1 transcription. The polypeptide is Homeobox protein Meis2 (Meis2) (Mus musculus (Mouse)).